We begin with the raw amino-acid sequence, 245 residues long: Orotidine 5'-phosphate decarboxylase (245 aa).

Substrate is bound by residues D22, K44, 71 to 80 (DLKFHDIPNT), T131, R192, Q201, G221, and R222. K73 serves as the catalytic Proton donor.

The protein belongs to the OMP decarboxylase family. Type 1 subfamily. As to quaternary structure, homodimer.

It carries out the reaction orotidine 5'-phosphate + H(+) = UMP + CO2. It functions in the pathway pyrimidine metabolism; UMP biosynthesis via de novo pathway; UMP from orotate: step 2/2. In terms of biological role, catalyzes the decarboxylation of orotidine 5'-monophosphate (OMP) to uridine 5'-monophosphate (UMP). In Salmonella newport (strain SL254), this protein is Orotidine 5'-phosphate decarboxylase.